Here is a 90-residue protein sequence, read N- to C-terminus: Probable Fe(2+)-trafficking protein (90 aa).

It belongs to the Fe(2+)-trafficking protein family. Monomer.

Could be a mediator in iron transactions between iron acquisition and iron-requiring processes, such as synthesis and/or repair of Fe-S clusters in biosynthetic enzymes. This is Probable Fe(2+)-trafficking protein from Enterobacter sp. (strain 638).